A 143-amino-acid polypeptide reads, in one-letter code: Interleukin-3 (143 aa).

A signal peptide spans 1-19 (MSRLPVLLLLHLLVSPGLQ). The cysteines at positions 35 and 103 are disulfide-linked. N-linked (GlcNAc...) asparagine glycosylation occurs at Asn-89.

The protein belongs to the IL-3 family. In terms of assembly, monomer. As to expression, activated T-cells, mast cells, natural killer cells.

It is found in the secreted. Granulocyte/macrophage colony-stimulating factors are cytokines that act in hematopoiesis by controlling the production, differentiation, and function of 2 related white cell populations of the blood, the granulocytes and the monocytes-macrophages. Functionally, this CSF induces granulocytes, macrophages, mast cells, stem cells, erythroid cells, eosinophils and megakaryocytes. This Macaca mulatta (Rhesus macaque) protein is Interleukin-3 (IL3).